Consider the following 607-residue polypeptide: Fucose-1-phosphate guanylyltransferase (607 aa).

The interval 1-21 is disordered; that stretch reads MRAVRRGLREGGAMAAARDPP.

In terms of tissue distribution, expressed in many tissues.

Its subcellular location is the cytoplasm. The catalysed reaction is beta-L-fucose 1-phosphate + GTP + H(+) = GDP-beta-L-fucose + diphosphate. In terms of biological role, catalyzes the formation of GDP-L-fucose from GTP and L-fucose-1-phosphate. Functions as a salvage pathway to reutilize L-fucose arising from the turnover of glycoproteins and glycolipids. This Homo sapiens (Human) protein is Fucose-1-phosphate guanylyltransferase.